Here is a 1215-residue protein sequence, read N- to C-terminus: Inner capsid protein VP3 (1215 aa).

The tract at residues 1-81 (MPRRPRRNAK…RVDNDGDVIT (81 aa)) is disordered. Residues 21–44 (LVAPAANASVSSTVNTTTSPTLAA) show a composition bias toward low complexity. Residues 118 to 141 (YRCNVCNAEFPSMSAMTEHLRTSH) form a C2H2-type zinc finger.

This sequence belongs to the turreted BTV-fold inner capsid family. Homodecamer; each decamer is made up of two conformers of VP2, called VP2A and VP2B. 12 homodecamers assemble to form an icosahedral capsid. Interacts with VP6.

The protein localises to the virion. Inner capsid protein that self-assembles to form an icosahedral capsid with a T=2 symmetry, which consists of 120 copies of VP2, with channels at each of its five-fold vertices. This capsid constitutes the innermost concentric layer of the viral mature particle. In Ctenopharyngodon idella (Grass carp), this protein is Inner capsid protein VP3 (S3).